The chain runs to 102 residues: Redox- and pH-responsive transcriptional regulator WhiB3 (102 aa).

The 65-residue stretch at 22–86 (LCRGMDSSMF…GGLSESERDL (65 aa)) folds into the 4Fe-4S Wbl-type domain. [4Fe-4S] cluster-binding residues include Cys23, Cys53, Cys56, and Cys62.

This sequence belongs to the WhiB family. As to quaternary structure, homodimer. Interacts with the C-terminal 54 residues of sigma factor SigA (RpoV). It depends on [4Fe-4S] cluster as a cofactor. In terms of processing, the 4Fe-4S cluster interacts with NO, forming a protein-bound dinitrosyliron dithiol complex. The 4Fe-4S cluster interacts with O(2), leading to its degradation. Cluster loss takes about 2 hours. Once in the apo-form the cysteines oxidize to form 2 intramolecular disulfide bonds.

The protein localises to the cytoplasm. Functionally, a redox-sensitive transcriptional regulator. Maintains intracellular redox homeostasis by regulating catabolic metabolism and polyketide biosynthesis. Regulates expression of the redox buffer ergothioneine (ERG) in a carbon-source-dependent manner; loss of ERG or mycothiol (MSH, the other major redox buffer in this bacteria) leads to respiratory alterations and bioenergetic deficiencies that negatively impact virulence. In response to low external pH (like that found in host macrophage phagosomes) alters endogenous gene expression leading to acid resistance; MSH and WhiB3 are probably part of a regulatory circuit that mediates gene expression upon acid stress. Regulates pathogenic lipid synthesis, coordinating proprionate flux (and other host-derived fatty acid oxidation intermediates) into methyl-branched fatty acids (polyacyltrehalose, phthiocerol dimycocerosates, sulfolipids) and the storage lipid triacylglycerol, functioning as reductive sink. During intracellular growth M.tuberculosis uses host fatty acids as an energy source, generating large quantities of proprionate and NADH/NADPH, which are toxic and highly reducing respectively. WhiB3 is thought to help dissipate proprionate and NADH/NADPH by switching to the in vivo carbon source and via lipid anabolism. Responds to NO and O(2). Regulates expression of genes encoding modular polyketide synthases such as pks2, pks3 and fbpA. The oxidized apo-form of WhiB3 binds DNA (with 2 intramolecular disulfide bonds); holo-WhiB3 (with the 4Fe-4S cluster) binds DNA considerably less well. Discriminates poorly between specific and non-specific DNA-binding. Plays a role in virulence and nutritional stress. In its apo-form can act as a protein disulfide reductase. Its function is as follows. May respond to mycothiol (MSH) redox potential (E-MSH) which decreases at pH 4.5 for up to 72 hours, indicative of cellular reductive stress; deletion of whiB3 leads to a lesser E-MSH at 72 hours, indicative of cellular oxidative stress. Probably via its effects on production of polyketide lipids, regulates host gene expression, leading to blockage of phagosome maturation. Equilibration of extra- and intracytoplasmic pH kills bacteria. In Mycobacterium tuberculosis (strain ATCC 25618 / H37Rv), this protein is Redox- and pH-responsive transcriptional regulator WhiB3 (whiB3).